Reading from the N-terminus, the 150-residue chain is Peptide deformylase 2 (150 aa).

Cysteine 89 and histidine 131 together coordinate Fe cation. Glutamate 132 is an active-site residue. Histidine 135 serves as a coordination point for Fe cation.

Belongs to the polypeptide deformylase family. Fe(2+) serves as cofactor.

It catalyses the reaction N-terminal N-formyl-L-methionyl-[peptide] + H2O = N-terminal L-methionyl-[peptide] + formate. Its function is as follows. Removes the formyl group from the N-terminal Met of newly synthesized proteins. Requires at least a dipeptide for an efficient rate of reaction. N-terminal L-methionine is a prerequisite for activity but the enzyme has broad specificity at other positions. This chain is Peptide deformylase 2, found in Clostridium acetobutylicum (strain ATCC 824 / DSM 792 / JCM 1419 / IAM 19013 / LMG 5710 / NBRC 13948 / NRRL B-527 / VKM B-1787 / 2291 / W).